Here is a 546-residue protein sequence, read N- to C-terminus: Chaperonin GroEL (546 aa).

ATP is bound by residues 30-33 (TLGP), Lys-51, 87-91 (DGTTT), Gly-415, 479-481 (NAA), and Asp-495.

Belongs to the chaperonin (HSP60) family. In terms of assembly, forms a cylinder of 14 subunits composed of two heptameric rings stacked back-to-back. Interacts with the co-chaperonin GroES.

It is found in the cytoplasm. The enzyme catalyses ATP + H2O + a folded polypeptide = ADP + phosphate + an unfolded polypeptide.. Together with its co-chaperonin GroES, plays an essential role in assisting protein folding. The GroEL-GroES system forms a nano-cage that allows encapsulation of the non-native substrate proteins and provides a physical environment optimized to promote and accelerate protein folding. In Azotobacter vinelandii, this protein is Chaperonin GroEL.